Reading from the N-terminus, the 251-residue chain is Keratin-associated protein 10-10 (251 aa).

15 consecutive repeat copies span residues 26–30 (CCEPC), 31–35 (CCAPA), 52–56 (CCQTA), 84–88 (CCTSS), 94–98 (CCVPV), 99–103 (CCVPV), 104–109 (CCVPVC), 126–130 (CCQQS), 136–140 (CCTSS), 146–150 (CCVPV), 168–172 (CCQQS), 178–182 (CCTAS), 183–187 (CCRPS), 202–206 (CCVPV), and 220–224 (CCRTA). A 15 X 5 AA repeats of C-C-X(3) region spans residues 26–224 (CCEPCCCAPA…SCQPSCCRTA (199 aa)).

Belongs to the KRTAP type 10 family. As to quaternary structure, interacts with hair keratins. As to expression, restricted to a narrow region of the hair fiber cuticle, lying approximately 20 cell layers above the apex of the dermal papilla of the hair root; not detected in any other tissues.

In the hair cortex, hair keratin intermediate filaments are embedded in an interfilamentous matrix, consisting of hair keratin-associated proteins (KRTAP), which are essential for the formation of a rigid and resistant hair shaft through their extensive disulfide bond cross-linking with abundant cysteine residues of hair keratins. The matrix proteins include the high-sulfur and high-glycine-tyrosine keratins. In Homo sapiens (Human), this protein is Keratin-associated protein 10-10 (KRTAP10-10).